The primary structure comprises 552 residues: Non-structural protein NS1 (552 aa).

It belongs to the orbivirus non-structural protein NS1 family.

The protein is Non-structural protein NS1 (Segment-5) of Antilocapra americana (Pronghorn).